A 196-amino-acid polypeptide reads, in one-letter code: Probable malonic semialdehyde reductase RutE (196 aa).

It belongs to the nitroreductase family. HadB/RutE subfamily. It depends on FMN as a cofactor.

It carries out the reaction 3-hydroxypropanoate + NADP(+) = 3-oxopropanoate + NADPH + H(+). Its function is as follows. May reduce toxic product malonic semialdehyde to 3-hydroxypropionic acid, which is excreted. This chain is Probable malonic semialdehyde reductase RutE, found in Yersinia enterocolitica serotype O:8 / biotype 1B (strain NCTC 13174 / 8081).